The chain runs to 543 residues: Probable protein kinase UbiB (543 aa).

Residues 123-501 (DFDSQALASA…GSRQGRARYL (379 aa)) enclose the Protein kinase domain. ATP is bound by residues 129–137 (LASASIAQV) and Lys-152. Asp-287 serves as the catalytic Proton acceptor. The helical transmembrane segment at 517-537 (MVNIALWPIGLYVAGGVIWLA) threads the bilayer.

This sequence belongs to the ABC1 family. UbiB subfamily.

The protein localises to the cell inner membrane. Its pathway is cofactor biosynthesis; ubiquinone biosynthesis [regulation]. Is probably a protein kinase regulator of UbiI activity which is involved in aerobic coenzyme Q (ubiquinone) biosynthesis. The sequence is that of Probable protein kinase UbiB from Edwardsiella ictaluri (strain 93-146).